The chain runs to 229 residues: MKQVRLPSSATVRAACAVAVAALAGCAQIPRDPIIQQPMTAQPPMPMSMQAPGSIYNPGFAGRPLFEDQRPRNIGDILTIMIAENINATKSSGANTNRQGNTDFNVPTAGFLGGLFAKANLSATGANKFAATGGASAANTFNGTITVTVTNVLPNGNLVVSGEKQMLINQGNEFVRFSGVVNPNTISGANSVYSTQVADAKIEYSSKGYINEAETMGWLQRFFLNIAPW.

A signal peptide spans 1–25; the sequence is MKQVRLPSSATVRAACAVAVAALAG. The N-palmitoyl cysteine moiety is linked to residue Cys-26. Cys-26 is lipidated: S-diacylglycerol cysteine.

This sequence belongs to the FlgH family. The basal body constitutes a major portion of the flagellar organelle and consists of four rings (L,P,S, and M) mounted on a central rod.

The protein resides in the cell outer membrane. It is found in the bacterial flagellum basal body. Functionally, assembles around the rod to form the L-ring and probably protects the motor/basal body from shearing forces during rotation. The chain is Flagellar L-ring protein from Burkholderia cenocepacia (strain ATCC BAA-245 / DSM 16553 / LMG 16656 / NCTC 13227 / J2315 / CF5610) (Burkholderia cepacia (strain J2315)).